A 165-amino-acid chain; its full sequence is Shikimate kinase (165 aa).

11-16 (GAGKTT) serves as a coordination point for ATP. T15 provides a ligand contact to Mg(2+). Substrate is bound by residues D33, R57, and G78. R116 serves as a coordination point for ATP. R134 contacts substrate.

This sequence belongs to the shikimate kinase family. Monomer. It depends on Mg(2+) as a cofactor.

The protein resides in the cytoplasm. It carries out the reaction shikimate + ATP = 3-phosphoshikimate + ADP + H(+). It functions in the pathway metabolic intermediate biosynthesis; chorismate biosynthesis; chorismate from D-erythrose 4-phosphate and phosphoenolpyruvate: step 5/7. In terms of biological role, catalyzes the specific phosphorylation of the 3-hydroxyl group of shikimic acid using ATP as a cosubstrate. In Bacillus cereus (strain G9842), this protein is Shikimate kinase.